A 203-amino-acid polypeptide reads, in one-letter code: Small ribosomal subunit protein uS4 (203 aa).

Positions 93–153 (QRLDSVVYRL…EKSKNILPIQ (61 aa)) constitute an S4 RNA-binding domain.

It belongs to the universal ribosomal protein uS4 family. Part of the 30S ribosomal subunit. Contacts protein S5. The interaction surface between S4 and S5 is involved in control of translational fidelity.

Its function is as follows. One of the primary rRNA binding proteins, it binds directly to 16S rRNA where it nucleates assembly of the body of the 30S subunit. In terms of biological role, with S5 and S12 plays an important role in translational accuracy. The polypeptide is Small ribosomal subunit protein uS4 (Leuconostoc mesenteroides subsp. mesenteroides (strain ATCC 8293 / DSM 20343 / BCRC 11652 / CCM 1803 / JCM 6124 / NCDO 523 / NBRC 100496 / NCIMB 8023 / NCTC 12954 / NRRL B-1118 / 37Y)).